Reading from the N-terminus, the 808-residue chain is Phenylalanine--tRNA ligase beta subunit (808 aa).

Residues 40-155 (NQGATGVVVG…DDVEIGSDAL (116 aa)) form the tRNA-binding domain. Positions 409–484 (IEEPVVSLNL…RLYGYDNIPT (76 aa)) constitute a B5 domain. Residues Asp462, Asp468, Glu471, and Glu472 each coordinate Mg(2+). In terms of domain architecture, FDX-ACB spans 714–807 (PRFPAISRDI…LEASTGAVLR (94 aa)).

This sequence belongs to the phenylalanyl-tRNA synthetase beta subunit family. Type 1 subfamily. Tetramer of two alpha and two beta subunits. Requires Mg(2+) as cofactor.

The protein resides in the cytoplasm. It catalyses the reaction tRNA(Phe) + L-phenylalanine + ATP = L-phenylalanyl-tRNA(Phe) + AMP + diphosphate + H(+). In Halalkalibacterium halodurans (strain ATCC BAA-125 / DSM 18197 / FERM 7344 / JCM 9153 / C-125) (Bacillus halodurans), this protein is Phenylalanine--tRNA ligase beta subunit (pheT).